The primary structure comprises 343 residues: Matrix protein (343 aa).

This sequence belongs to the morbillivirus/respirovirus/rubulavirus M protein family. Homodimer. Dimerization is critical for virion formation. Interacts with host ANP32B.

It localises to the virion. The protein resides in the host cell membrane. The M protein has a crucial role in virus assembly and interacts with the RNP complex as well as with the viral membrane. Associates with phosphatidylserine (PS) and phosphatidylinositol 4,5-bisphosphate (PIP2) at the plasma membrane. Interaction with PIP2 triggers matrix protein lattice polymerization. Matrix proteins induce host membrane deformation and curvature necessary for virion assembly/budding. This chain is Matrix protein (M), found in Measles virus (strain Biken) (MeV).